The sequence spans 59 residues: Photosystem II reaction center protein K (59 aa).

Residues 1-22 (MLNIFSLICLNSDLYSSRFFLA) constitute a propeptide that is removed on maturation. A helical membrane pass occupies residues 38–58 (MPVIPLFFLLLAFVWQAAVSF).

The protein belongs to the PsbK family. PSII is composed of 1 copy each of membrane proteins PsbA, PsbB, PsbC, PsbD, PsbE, PsbF, PsbH, PsbI, PsbJ, PsbK, PsbL, PsbM, PsbT, PsbX, PsbY, PsbZ, Psb30/Ycf12, at least 3 peripheral proteins of the oxygen-evolving complex and a large number of cofactors. It forms dimeric complexes.

It is found in the plastid. It localises to the chloroplast thylakoid membrane. Its function is as follows. One of the components of the core complex of photosystem II (PSII). PSII is a light-driven water:plastoquinone oxidoreductase that uses light energy to abstract electrons from H(2)O, generating O(2) and a proton gradient subsequently used for ATP formation. It consists of a core antenna complex that captures photons, and an electron transfer chain that converts photonic excitation into a charge separation. This is Photosystem II reaction center protein K from Oenothera elata subsp. hookeri (Hooker's evening primrose).